The following is a 1384-amino-acid chain: MTSYSFTEKKRIRKDFGKHRSILKVPFLLAIQVDSYRAFLQGDVESSQRKDIGLHGALKSVFPIVSYSGNAALEYVGYKLGEPMFDERECRQRGMSYGAPLRVTVRLVIYDRESSTKAVKYIKEQEVYLGEIPLMTENGTFIVNGTERVIVSQLHRSPGVFFDHDRGKTHSSGKLLYSARIIPCRGSWLDFEFDPKDALFTRIDRRRKLPVSILLRALGYSNEEILGEFFEINTFHINPDEGVQLELVPERLRGEILSFNLTDGGSVIVEAGKRITARHVKQLEASGISALAVPDEYLIGRILSHDVIDATTGELLASANSEVNEDRIIAFRKAGIESVGTLWVNDLDRGAYLSNTLRIDPTRTQLEAQVEIYRMMRPGEPPTKEAAQNLFHNLFFTFDRYDLSMVGRMKFNRRVGRKEVAGEPVLYDKKYFSDRNDEESRRLVSKLGETSDILDVIKGLCEIRNGRGVVDDIDHLGNRRVRSVGEMAENVFRVGLVRVERAVKERLSMAESEGLTPQELINAKPVAAAIKEFFGSSQLSQFMDQNNPLSEVTHKRRLSALGPGGLTRERAGFEVRDVHLSHYGCLCTIETPEGPNIGLINSLAVFARTNQYGFLETPYRKVVEGRVTDEVEYLSAIEENQYVIAQANTLTDDNGQLTESFVPCRFQGESLLKPPSYVHYMDVSPMQTVSVAAALVPFLEHDDANRALMGANMQRQAVPTLRAQKPLVGTGIERTVARDSGVTVNARRGGVIDQVDAGRIVVKVNESEIIGATDAGVDIYGLIKYTRSNQNTCINQRPLVNVGDIVASGDVLADGPSTDIGELALGQNMLIAFMPWNGYNFEDSILLSERVVEEDRYTTIHIEELTCIARDTKLGSEEISADIPNVSEQALNRLDESGVVYIGAEVRAGDILVGKVTPKGESQLTPEEKLLRAIFGEKASDVKDSSLRVPPGMDGTVIDVQVFTRDGIEKDKRAHQIEEYEIKRVKKDFDDQFRILEGAIYARLRSQIVGKVVNSGVDIKKGEVITDPYLDGLKKSDWFALRMKDEVAVEAIDRAQKQIQAYQKEFDQRFSDKRSKITQGDDLAPGVLKMVKVFLAVKRCIQCGDKMAGRHGNKGVISNVVPVEDMPFMEDGTPVDIVLNPLGVPSRMNIGQILEVHLGWAAKGLGHRIQRMLEANAAIADLRKFLNEIYNHDKSLVGERVDLSQFSDDELLNMAKNLTDGVPMASPVFDGASEQEIKRMLDLAELPAGGQTQLYDGHTGEPFDRKTTVGYMHYLKLNHLVDDKMHARSTGPYSLVTQQPLGGKAQFGGQRFGEMEVWALEAYGAAYTLQEMLTVKSDDVQGRNQMYKNIVDGDHQMVAGMPESFNVLVKEIRSLAINIELEDN.

The protein belongs to the RNA polymerase beta chain family. The RNAP catalytic core consists of 2 alpha, 1 beta, 1 beta' and 1 omega subunit. When a sigma factor is associated with the core the holoenzyme is formed, which can initiate transcription.

It carries out the reaction RNA(n) + a ribonucleoside 5'-triphosphate = RNA(n+1) + diphosphate. Its function is as follows. DNA-dependent RNA polymerase catalyzes the transcription of DNA into RNA using the four ribonucleoside triphosphates as substrates. The chain is DNA-directed RNA polymerase subunit beta from Xylella fastidiosa (strain M23).